Consider the following 683-residue polypeptide: UvrABC system protein B (683 aa).

The interval 1–29 (MTDTGPLQPDRPDLDRPLSVDAPFEPAGD) is disordered. Residues 39–417 (AGFESGAEKQ…PGDYERDHSE (379 aa)) form the Helicase ATP-binding domain. An ATP-binding site is contributed by 52–59 (GVTGSGKT). Positions 105–128 (YYDYYQPEAYVEQTDTYIDKDMSI) match the Beta-hairpin motif. The 163-residue stretch at 442-604 (QVEDLIERIQ…EPRTIEKPVS (163 aa)) folds into the Helicase C-terminal domain. The span at 587–603 (EFNAEHGHEPRTIEKPV) shows a compositional bias: basic and acidic residues. A disordered region spans residues 587–620 (EFNAEHGHEPRTIEKPVSETNLPGSSTDTDGVAD). Positions 604–615 (SETNLPGSSTDT) are enriched in polar residues. The UVR domain maps to 630–665 (EQLIERLETRMQEAADNLEFELAADIRDRIRELRET).

The protein belongs to the UvrB family. As to quaternary structure, forms a heterotetramer with UvrA during the search for lesions. Interacts with UvrC in an incision complex.

It is found in the cytoplasm. The UvrABC repair system catalyzes the recognition and processing of DNA lesions. A damage recognition complex composed of 2 UvrA and 2 UvrB subunits scans DNA for abnormalities. Upon binding of the UvrA(2)B(2) complex to a putative damaged site, the DNA wraps around one UvrB monomer. DNA wrap is dependent on ATP binding by UvrB and probably causes local melting of the DNA helix, facilitating insertion of UvrB beta-hairpin between the DNA strands. Then UvrB probes one DNA strand for the presence of a lesion. If a lesion is found the UvrA subunits dissociate and the UvrB-DNA preincision complex is formed. This complex is subsequently bound by UvrC and the second UvrB is released. If no lesion is found, the DNA wraps around the other UvrB subunit that will check the other stand for damage. This is UvrABC system protein B from Natronomonas pharaonis (strain ATCC 35678 / DSM 2160 / CIP 103997 / JCM 8858 / NBRC 14720 / NCIMB 2260 / Gabara) (Halobacterium pharaonis).